The chain runs to 124 residues: Small ribosomal subunit protein bS6 (124 aa).

Belongs to the bacterial ribosomal protein bS6 family.

Binds together with bS18 to 16S ribosomal RNA. The polypeptide is Small ribosomal subunit protein bS6 (Campylobacter lari (strain RM2100 / D67 / ATCC BAA-1060)).